The sequence spans 145 residues: Cystatin-F (145 aa).

An N-terminal signal peptide occupies residues 1–19 (MRAAGTLLAFCCLVLSTTG). An N-linked (GlcNAc...) asparagine glycan is attached at Asn62. The Secondary area of contact motif lies at 81 to 85 (QIVKG). Cys99 and Cys110 are joined by a disulfide. N-linked (GlcNAc...) asparagine glycosylation occurs at Asn115. Cys124 and Cys144 are oxidised to a cystine.

This sequence belongs to the cystatin family. As to quaternary structure, homodimer; disulfide-linked. As to expression, primarily expressed in peripheral blood cells and spleen.

The protein localises to the secreted. It is found in the cytoplasm. Its function is as follows. Inhibits papain and cathepsin L but with affinities lower than other cystatins. May play a role in immune regulation through inhibition of a unique target in the hematopoietic system. This is Cystatin-F (CST7) from Homo sapiens (Human).